The chain runs to 222 residues: Cytidylate kinase (222 aa).

An ATP-binding site is contributed by 11-19 (GPSGSGKST).

This sequence belongs to the cytidylate kinase family. Type 1 subfamily.

Its subcellular location is the cytoplasm. It catalyses the reaction CMP + ATP = CDP + ADP. It carries out the reaction dCMP + ATP = dCDP + ADP. This Ureaplasma urealyticum serovar 10 (strain ATCC 33699 / Western) protein is Cytidylate kinase.